The sequence spans 319 residues: uncharacterized protein (319 aa).

The next 9 helical transmembrane spans lie at 11–31, 43–63, 83–103, 108–128, 134–154, 195–215, 220–240, 260–280, and 284–304; these read GLWA…LGVF, ALGW…GVWW, LSVD…IPAL, VLFW…FAGV, FHWL…KLFL, LATP…LFAL, AIFA…FAIL, KVGL…IDFV, and PEVS…ASLI.

The protein belongs to the TerC family.

It is found in the cell membrane. This is an uncharacterized protein from Myxococcus xanthus.